We begin with the raw amino-acid sequence, 577 residues long: Monooxygenase PC-14 (577 aa).

The protein belongs to the FMO family. Requires FAD as cofactor.

Its pathway is secondary metabolite biosynthesis. Its function is as follows. Monooxygenase; part of the gene cluster that mediates the biosynthesis of the indole diterpenes penitrems. The geranylgeranyl diphosphate (GGPP) synthase penG catalyzes the first step in penitrem biosynthesis via conversion of farnesyl pyrophosphate and isopentyl pyrophosphate into geranylgeranyl pyrophosphate (GGPP). Condensation of indole-3-glycerol phosphate with GGPP by the prenyl transferase penC then forms 3-geranylgeranylindole (3-GGI). Epoxidation by the FAD-dependent monooxygenase penM leads to a epoxidized-GGI that is substrate of the terpene cyclase penB for cyclization to yield paspaline. Paspaline is subsequently converted to 13-desoxypaxilline by the cytochrome P450 monooxygenase penP, the latter being then converted to paxilline by the cytochrome P450 monooxygenase penQ. Paxilline is converted to beta-paxitriol via C-10 ketoreduction by the short-chain dehydrogenase PC-15 which can be monoprenylated at the C-20 by the indole diterpene prenyltransferase penD. A two-step elimination (acetylation and elimination) process performed by the O-acetyltransferase PC-16 and the P.simplicissimum ptmI-ortholog not yet identified in P.crustosum, leads to the production of the prenylated form of penijanthine. The FAD-linked oxidoreductase ptmO then converts the prenylated form of penijanthine into PC-M5 which is in turn transformed into PC-M4 by the aromatic dimethylallyltransferase PC-22. A series of oxidation steps involving 4 cytochrome P450 monooxygenases (PC-21, PC-05, PC-23, PC-20) and a FAD-dependent monooxygenase (PC-14) are required for the transformation of PC-M4 to penitrems A and E. Synthesis of these final products is proposed to proceed via penitrems D and C (PC-21, PC-05, PC-14) and penitrems B and F (PC-21, PC-05, PC-14, PC-23). The polypeptide is Monooxygenase PC-14 (Penicillium crustosum (Blue mold fungus)).